Reading from the N-terminus, the 171-residue chain is Small ribosomal subunit protein uS13 (171 aa).

Over residues M1–V11 the composition is skewed to polar residues. 2 disordered regions span residues M1–E24 and E144–I164. A compositionally biased stretch (basic residues) spans E144–G158.

This sequence belongs to the universal ribosomal protein uS13 family. As to quaternary structure, part of the 30S ribosomal subunit. Forms a loose heterodimer with protein S19. Forms two bridges to the 50S subunit in the 70S ribosome.

In terms of biological role, located at the top of the head of the 30S subunit, it contacts several helices of the 16S rRNA. In the 70S ribosome it contacts the 23S rRNA (bridge B1a) and protein L5 of the 50S subunit (bridge B1b), connecting the 2 subunits; these bridges are implicated in subunit movement. The polypeptide is Small ribosomal subunit protein uS13 (Thermoplasma acidophilum (strain ATCC 25905 / DSM 1728 / JCM 9062 / NBRC 15155 / AMRC-C165)).